Consider the following 706-residue polypeptide: Probable N(6)-adenosine-methyltransferase MT-A70-like (706 aa).

2 disordered regions span residues 64–114 (RPFV…VAAA) and 223–261 (TLPL…PDMW). The span at 103–114 (SPGSSPASVAAA) shows a compositional bias: low complexity. Residues 227 to 236 (LQPPPAPQMP) are compositionally biased toward pro residues. Residues 479–480 (DI) and Asp-497 contribute to the S-adenosyl-L-methionine site. The interval 567 to 580 (RIIRTGRTGHWLNH) is positively charged region required for RNA-binding. S-adenosyl-L-methionine-binding positions include Lys-614, 637 to 640 (RMHN), and 650 to 651 (NQ). Residues 669-706 (AYPDSEVQPPSPPRASAPIDGDQGTSQKPTVSDGERPA) form a disordered region.

Belongs to the MT-A70-like family.

It localises to the nucleus. It catalyses the reaction an adenosine in mRNA + S-adenosyl-L-methionine = an N(6)-methyladenosine in mRNA + S-adenosyl-L-homocysteine + H(+). In terms of biological role, probable N6-methyltransferase that methylates adenosine residues of some mRNAs. N6-methyladenosine (m6A), which is present at internal sites of some mRNAs, may play a role in the efficiency of mRNA splicing, transport or translation. This Oryza sativa subsp. japonica (Rice) protein is Probable N(6)-adenosine-methyltransferase MT-A70-like.